We begin with the raw amino-acid sequence, 743 residues long: Polyribonucleotide nucleotidyltransferase (743 aa).

Positions 489 and 495 each coordinate Mg(2+). One can recognise a KH domain in the interval 556–618 (PRIEKMHIGK…PCIDAAIGMI (63 aa)). Residues 628-698 (GETYPGKITS…KTGKFKLSRK (71 aa)) form the S1 motif domain. The interval 704–743 (PEGYVEPQPRERRERREGGREGGRNFERRGGDRDHREPRG) is disordered.

The protein belongs to the polyribonucleotide nucleotidyltransferase family. The cofactor is Mg(2+).

The protein resides in the cytoplasm. It carries out the reaction RNA(n+1) + phosphate = RNA(n) + a ribonucleoside 5'-diphosphate. Functionally, involved in mRNA degradation. Catalyzes the phosphorolysis of single-stranded polyribonucleotides processively in the 3'- to 5'-direction. The chain is Polyribonucleotide nucleotidyltransferase from Porphyromonas gingivalis (strain ATCC 33277 / DSM 20709 / CIP 103683 / JCM 12257 / NCTC 11834 / 2561).